The following is a 481-amino-acid chain: Bestrophin homolog 17 (481 aa).

Topologically, residues 1–27 (MTVSYQLDVSSGNPLLFLRLLGRWRGS) are cytoplasmic. Residues 28–48 (IWKSVVGDLFVWLLFYYAIYF) traverse the membrane as a helical segment. Over 49–95 (AYRYAFSKQLQTVFEEISIHTDDRMKYLPLTFMLGFFVTTVFERWRS) the chain is Extracellular. A helical membrane pass occupies residues 96–116 (ALNVMPFIESVALSVAVLLPG). Residues 117 to 230 (KGREDRLTRR…AMETLIKFDA (114 aa)) lie on the Cytoplasmic side of the membrane. Residues 231 to 251 (IPIPIAYPQVVFLAVRVYFAI) form a helical membrane-spanning segment. The Extracellular segment spans residues 252-274 (CLVSRQFLISDMKSKTQMDWPVP). A helical membrane pass occupies residues 275–295 (IMTVLEFIFVIGWMKVAEVLL). Over 296–481 (NPLGEDDDDF…SSEESVDKKG (186 aa)) the chain is Cytoplasmic. Positions 427–481 (AGMLNKSTQPDRPTMETVSEEHEPSHFYRGDRVHSSDSGLSKTQQSSEESVDKKG) are disordered. A compositionally biased stretch (basic and acidic residues) spans 445 to 461 (SEEHEPSHFYRGDRVHS). Over residues 462–474 (SDSGLSKTQQSSE) the composition is skewed to polar residues.

This sequence belongs to the anion channel-forming bestrophin (TC 1.A.46) family. Calcium-sensitive chloride channel subfamily. Forms oligomers.

It localises to the cell membrane. Its function is as follows. Forms chloride channels. The polypeptide is Bestrophin homolog 17 (Caenorhabditis elegans).